Reading from the N-terminus, the 409-residue chain is Single Ig IL-1-related receptor (409 aa).

At 1-117 the chain is on the extracellular side; that stretch reads MAGVCDMAPN…TLWRAGPAGH (117 aa). Residues 9–108 enclose the Ig-like C2-type domain; the sequence is PNFLSPSEDQ…VWNVSSHSFT (100 aa). 5 N-linked (GlcNAc...) asparagine glycosylation sites follow: asparagine 31, asparagine 58, asparagine 73, asparagine 85, and asparagine 101. Residues cysteine 32 and cysteine 97 are joined by a disulfide bond. The helical; Signal-anchor for type III membrane protein transmembrane segment at 118–138 threads the bilayer; it reads VAAVLASLLVLVVLLLVALLY. At 139–409 the chain is on the cytoplasmic side; sequence VKCRLNMLLW…FYCLVSEDDV (271 aa). In terms of domain architecture, TIR spans 162-306; the sequence is KLYDAYVSYS…DFWKELQLAL (145 aa). Residue serine 382 is modified to Phosphoserine.

It belongs to the interleukin-1 receptor family. In terms of assembly, interacts with IL1R1, IRAK1, TLR4, TLR5, TLR9 and TRAF6. Upon IL-1 stimulation found in a complex at least composed of IL1R1, SIGIRR, MYD88, IRAK1 and TRAF6. Upon stimulation with LPC found in a complex at least composed of TLR4, SIG1IR, MYD88, IRAK1 and TRAF6. Interacts with PALM3. As to expression, expressed at high levels in kidney, and at moderate levels in colon, small intestine, lung, spleen and liver. Not expressed in brain and muscle. Expressed at high levels in epithelial cells, at moderate levels in splenocytes, and at low or undetectable levels in fibroblasts or endothelial cells. Expressed in mucosal and dendritic cells.

The protein localises to the membrane. In terms of biological role, acts as a negative regulator of the Toll-like and IL-1R receptor signaling pathways. Attenuates the recruitment of receptor-proximal signaling components to the TLR4 receptor, probably through an TIR-TIR domain interaction with TLR4. Through its extracellular domain interferes with the heterodimerization of Il1R1 and IL1RAP. This is Single Ig IL-1-related receptor (Sigirr) from Mus musculus (Mouse).